A 1342-amino-acid polypeptide reads, in one-letter code: DNA-directed RNA polymerase subunit beta (1342 aa).

Belongs to the RNA polymerase beta chain family. In terms of assembly, the RNAP catalytic core consists of 2 alpha, 1 beta, 1 beta' and 1 omega subunit. When a sigma factor is associated with the core the holoenzyme is formed, which can initiate transcription.

It catalyses the reaction RNA(n) + a ribonucleoside 5'-triphosphate = RNA(n+1) + diphosphate. Functionally, DNA-dependent RNA polymerase catalyzes the transcription of DNA into RNA using the four ribonucleoside triphosphates as substrates. The protein is DNA-directed RNA polymerase subunit beta of Glaesserella parasuis serovar 5 (strain SH0165) (Haemophilus parasuis).